Here is a 140-residue protein sequence, read N- to C-terminus: MAMTVHCDIVSAEQEIFSGAIELLVAASVEGDVGINYGHAPLLTALKPGPVRVKKLDGEEEIFYVSGGYLEVQPHVVTVLADTALRAGDMDEAAAEAAMKEAEQAIQSSEGLDYSKAAAQLAESAAQLRTLQAIRKKLQR.

It belongs to the ATPase epsilon chain family. As to quaternary structure, F-type ATPases have 2 components, CF(1) - the catalytic core - and CF(0) - the membrane proton channel. CF(1) has five subunits: alpha(3), beta(3), gamma(1), delta(1), epsilon(1). CF(0) has three main subunits: a, b and c.

Its subcellular location is the cell inner membrane. Functionally, produces ATP from ADP in the presence of a proton gradient across the membrane. The sequence is that of ATP synthase epsilon chain from Saccharophagus degradans (strain 2-40 / ATCC 43961 / DSM 17024).